A 380-amino-acid chain; its full sequence is Coiled-coil domain-containing protein 74B (380 aa).

Disordered regions lie at residues 1-51, 89-108, and 128-202; these read MSGA…KRNL, LIMNQTSQKKDGPSGNHLSR, and GGPS…DVPQ. Polar residues predominate over residues 34-44; sequence LRPQSPQLRQS. Residues 47–93 are a coiled coil; sequence QKRNLDLEKSLQFLQQQHSEMLAKLHEEIEHLKRENKDLRYKLIMNQ. Basic residues predominate over residues 141-151; it reads RTHRPGGKHGR. Over residues 165-182 the composition is skewed to polar residues; sequence DSLSTSSFQSVKSISNSG.

The sequence is that of Coiled-coil domain-containing protein 74B (CCDC74B) from Homo sapiens (Human).